The following is a 908-amino-acid chain: Metabotropic glutamate receptor 8 (908 aa).

The first 33 residues, 1–33 (MVCEGKRLASCPCFFLLTAKFYWILTMMQRTHS), serve as a signal peptide directing secretion. At 34–583 (QEYAHSIRVD…IIKLEWHSPW (550 aa)) the chain is on the extracellular side. Cys64 and Cys106 are disulfide-bonded. Asn95 is a glycosylation site (N-linked (GlcNAc...) asparagine). Residues Ser156, 177-179 (AST), and Tyr227 each bind L-glutamate. Disulfide bonds link Cys246–Cys534, Cys369–Cys384, Cys424–Cys431, Cys516–Cys535, Cys520–Cys538, Cys541–Cys553, and Cys556–Cys569. Residue Asn298 is glycosylated (N-linked (GlcNAc...) asparagine). Asp309 is a binding site for L-glutamate. Lys401 is a binding site for L-glutamate. N-linked (GlcNAc...) asparagine glycosylation is found at Asn452 and Asn480. A glycan (N-linked (GlcNAc...) asparagine) is linked at Asn565. The helical transmembrane segment at 584–608 (AVVPVFIAILGIIATTFVIVTFVRY) threads the bilayer. Topologically, residues 609 to 620 (NDTPIVRASGRE) are cytoplasmic. Residues 621 to 641 (LSYVLLTGIFLCYSITFLMIA) form a helical membrane-spanning segment. The Extracellular portion of the chain corresponds to 642 to 647 (APDTII). The helical transmembrane segment at 648 to 668 (CSFRRIFLGLGMCFSYAALLT) threads the bilayer. Residues 669–695 (KTNRIHRIFEQGKKSVTAPKFISPASQ) lie on the Cytoplasmic side of the membrane. The chain crosses the membrane as a helical span at residues 696–716 (LVITFSLISVQLLGVFVWFVV). At 717–746 (DPPHTIIDYGEQRTLDPENARGVLKCDISD) the chain is on the extracellular side. A helical membrane pass occupies residues 747–768 (LSLICSLGYSILLMVTCTVYAI). Residues 769–781 (KTRGVPETFNEAK) are Cytoplasmic-facing. A helical transmembrane segment spans residues 782-803 (PIGFTMYTTCIIWLAFIPIFFG). At 804-818 (TAQSAEKMYIQTTTL) the chain is on the extracellular side. A helical membrane pass occupies residues 819-843 (TVSMSLSASVSLGMLYMPKVYIIIF). Topologically, residues 844–908 (HPEQNVQKRK…TYISYSNHSI (65 aa)) are cytoplasmic. Lys882 participates in a covalent cross-link: Glycyl lysine isopeptide (Lys-Gly) (interchain with G-Cter in SUMO1).

The protein belongs to the G-protein coupled receptor 3 family. As to quaternary structure, interacts with PICK1. Prominent expression in olfactory bulb, pontine gray, lateral reticular nucleus of the thalamus, and piriform cortex. Less abundant expression incerebral cortex, hippocampus, cerebellum, and mammillary body.

The protein localises to the cell membrane. Functionally, G-protein coupled receptor for glutamate. Ligand binding causes a conformation change that triggers signaling via guanine nucleotide-binding proteins (G proteins) and modulates the activity of down-stream effectors. Signaling inhibits adenylate cyclase activity. This chain is Metabotropic glutamate receptor 8 (Grm8), found in Rattus norvegicus (Rat).